The chain runs to 63 residues: ATP synthase membrane subunit K, mitochondrial (63 aa).

A helical transmembrane segment spans residues 15–37; the sequence is TMRGRANVAKATWASLGLVYVLV.

F-type ATPases have 2 components, CF(1) - the catalytic core - and CF(0) - the membrane proton channel. CF(1) has five subunits: alpha(3), beta(3), gamma(1), delta(1), epsilon(1). CF(0) has three main subunits: a, b and c. The ATP synthase complex/complex V exists as a monomeric and a dimeric supercomplex that helps shape mitochondrial cristae to optimize proton flow.

The protein localises to the mitochondrion membrane. Its function is as follows. Mitochondrial membrane ATP synthase (F(1)F(0) ATP synthase or Complex V) produces ATP from ADP in the presence of a proton gradient across the membrane which is generated by electron transport complexes of the respiratory chain. F-type ATPases consist of two structural domains, F(1) - containing the extramembraneous catalytic core and F(0) - containing the membrane proton channel, linked together by a central stalk and a peripheral stalk. During catalysis, ATP synthesis in the catalytic domain of F(1) is coupled via a rotary mechanism of the central stalk subunits to proton translocation. ATP5MK is a minor subunit of the mitochondrial membrane ATP synthase required for dimerization of the ATP synthase complex and as such regulates ATP synthesis in the mitochondria. This chain is ATP synthase membrane subunit K, mitochondrial, found in Drosophila melanogaster (Fruit fly).